The primary structure comprises 616 residues: Dihydroxy-acid dehydratase (616 aa).

Residue Asp-81 participates in Mg(2+) binding. Cys-122 provides a ligand contact to [2Fe-2S] cluster. The Mg(2+) site is built by Asp-123 and Lys-124. Lys-124 bears the N6-carboxylysine mark. Cys-195 lines the [2Fe-2S] cluster pocket. Glu-491 provides a ligand contact to Mg(2+). The Proton acceptor role is filled by Ser-517.

It belongs to the IlvD/Edd family. In terms of assembly, homodimer. The cofactor is [2Fe-2S] cluster. Mg(2+) serves as cofactor.

It carries out the reaction (2R)-2,3-dihydroxy-3-methylbutanoate = 3-methyl-2-oxobutanoate + H2O. The catalysed reaction is (2R,3R)-2,3-dihydroxy-3-methylpentanoate = (S)-3-methyl-2-oxopentanoate + H2O. Its pathway is amino-acid biosynthesis; L-isoleucine biosynthesis; L-isoleucine from 2-oxobutanoate: step 3/4. It functions in the pathway amino-acid biosynthesis; L-valine biosynthesis; L-valine from pyruvate: step 3/4. Functionally, functions in the biosynthesis of branched-chain amino acids. Catalyzes the dehydration of (2R,3R)-2,3-dihydroxy-3-methylpentanoate (2,3-dihydroxy-3-methylvalerate) into 2-oxo-3-methylpentanoate (2-oxo-3-methylvalerate) and of (2R)-2,3-dihydroxy-3-methylbutanoate (2,3-dihydroxyisovalerate) into 2-oxo-3-methylbutanoate (2-oxoisovalerate), the penultimate precursor to L-isoleucine and L-valine, respectively. This chain is Dihydroxy-acid dehydratase, found in Shigella flexneri.